The primary structure comprises 208 residues: Small ribosomal subunit protein uS4 (208 aa).

The region spanning 98–159 (LRLDNVVFRL…RSKKVVRITE (62 aa)) is the S4 RNA-binding domain.

This sequence belongs to the universal ribosomal protein uS4 family. In terms of assembly, part of the 30S ribosomal subunit. Contacts protein S5. The interaction surface between S4 and S5 is involved in control of translational fidelity.

In terms of biological role, one of the primary rRNA binding proteins, it binds directly to 16S rRNA where it nucleates assembly of the body of the 30S subunit. Functionally, with S5 and S12 plays an important role in translational accuracy. The sequence is that of Small ribosomal subunit protein uS4 from Anaeromyxobacter dehalogenans (strain 2CP-1 / ATCC BAA-258).